The following is a 176-amino-acid chain: ATP-dependent protease subunit HslV (176 aa).

The active site involves threonine 4. Positions 158, 161, and 164 each coordinate Na(+).

Belongs to the peptidase T1B family. HslV subfamily. In terms of assembly, a double ring-shaped homohexamer of HslV is capped on each side by a ring-shaped HslU homohexamer. The assembly of the HslU/HslV complex is dependent on binding of ATP.

It localises to the cytoplasm. It catalyses the reaction ATP-dependent cleavage of peptide bonds with broad specificity.. Allosterically activated by HslU binding. Protease subunit of a proteasome-like degradation complex believed to be a general protein degrading machinery. The chain is ATP-dependent protease subunit HslV from Rhizobium meliloti (strain 1021) (Ensifer meliloti).